We begin with the raw amino-acid sequence, 105 residues long: UPF0145 protein jk0060 (105 aa).

Belongs to the UPF0145 family.

The chain is UPF0145 protein jk0060 from Corynebacterium jeikeium (strain K411).